Reading from the N-terminus, the 788-residue chain is Histidine--tRNA ligase, cytoplasmic (788 aa).

Residues 252–286 (PQACEENEAGSSTENPHASGEKPKGDKKSKKKKTL) form a disordered region.

This sequence belongs to the class-II aminoacyl-tRNA synthetase family. As to quaternary structure, homodimer.

It carries out the reaction tRNA(His) + L-histidine + ATP = L-histidyl-tRNA(His) + AMP + diphosphate + H(+). The chain is Histidine--tRNA ligase, cytoplasmic from Oryza sativa subsp. japonica (Rice).